The sequence spans 337 residues: 3-isopropylmalate dehydrogenase (337 aa).

4 residues coordinate substrate: arginine 86, arginine 96, arginine 117, and aspartate 201. Mg(2+)-binding residues include aspartate 201, aspartate 225, and aspartate 229. 258 to 270 contributes to the NAD(+) binding site; that stretch reads GAAFDIAGKNIGN.

The protein belongs to the isocitrate and isopropylmalate dehydrogenases family. As to quaternary structure, homotetramer. The cofactor is Mg(2+). Mn(2+) is required as a cofactor.

It localises to the cytoplasm. The catalysed reaction is (2R,3S)-3-isopropylmalate + NAD(+) = 4-methyl-2-oxopentanoate + CO2 + NADH. It participates in amino-acid biosynthesis; L-leucine biosynthesis; L-leucine from 3-methyl-2-oxobutanoate: step 3/4. Its function is as follows. Catalyzes the oxidation of 3-carboxy-2-hydroxy-4-methylpentanoate (3-isopropylmalate) to 3-carboxy-4-methyl-2-oxopentanoate. The product decarboxylates to 4-methyl-2 oxopentanoate. The protein is 3-isopropylmalate dehydrogenase (leuB) of Sulfurisphaera tokodaii (strain DSM 16993 / JCM 10545 / NBRC 100140 / 7) (Sulfolobus tokodaii).